The primary structure comprises 1097 residues: Error-prone DNA polymerase (1097 aa).

The interval 1039–1097 is disordered; the sequence is PTGRGDEFAHGSPGGGDSRDRSPPKPRDIVVPLCRARHKGIDPEPETMPSAFPKPRDFR. A compositionally biased stretch (basic and acidic residues) spans 1055-1066; it reads DSRDRSPPKPRD.

The protein belongs to the DNA polymerase type-C family. DnaE2 subfamily.

Its subcellular location is the cytoplasm. It carries out the reaction DNA(n) + a 2'-deoxyribonucleoside 5'-triphosphate = DNA(n+1) + diphosphate. In terms of biological role, DNA polymerase involved in damage-induced mutagenesis and translesion synthesis (TLS). It is not the major replicative DNA polymerase. The sequence is that of Error-prone DNA polymerase from Allorhizobium ampelinum (strain ATCC BAA-846 / DSM 112012 / S4) (Agrobacterium vitis (strain S4)).